A 180-amino-acid chain; its full sequence is uncharacterized protein (180 aa).

Positions 114–147 (EDIYEDIVDVRLENQSLEEQLEDFKECSRALKKY) form a coiled coil.

It belongs to the mimivirus L74/L77/R857 family.

This is an uncharacterized protein from Acanthamoeba polyphaga mimivirus (APMV).